Reading from the N-terminus, the 583-residue chain is uncharacterized protein (583 aa).

24 to 140 (ILADIDDEQL…SAMLRAMARM (117 aa)) contacts a nucleoside 3',5'-cyclic phosphate. The PNPLA domain occupies 309-469 (LVMAGGGARG…LNNLPANVMC (161 aa)). A GXGXXG motif is present at residues 313-318 (GGGARG). Residues 340 to 344 (GTSSG) carry the GXSXG motif. Serine 342 functions as the Nucleophile in the catalytic mechanism. Catalysis depends on aspartate 456, which acts as the Proton acceptor. The DGA/G motif lies at 456 to 458 (DGG).

It belongs to the NTE family.

This is an uncharacterized protein from Mycobacterium bovis (strain ATCC BAA-935 / AF2122/97).